The sequence spans 1153 residues: AP-3 complex subunit delta-1 (1153 aa).

Residue Ala-2 is modified to N-acetylalanine. HEAT repeat units follow at residues 34–71 (KYIS…LGYD), 77–114 (FNII…LTTN), 142–179 (DLAR…KYPE), 180–216 (SLRP…RNPK), 254–292 (RLGK…SLSS), 299–336 (ASIQ…THPK), 338–373 (VQSH…KKNL), 375–409 (EIVK…QSNY), 431–468 (TRHG…SAHL), 497–535 (QEPH…SILQ), and 548–585 (AVTQ…IQKL). Disordered stretches follow at residues 629 to 696 (EPLS…YQDT) and 726 to 920 (KLEE…PPES). Phosphoserine occurs at positions 632, 634, 636, and 658. Basic and acidic residues predominate over residues 639–675 (ERPRAVFHEEEQRRPKHRPSEADEEELARRREARKQE). A coiled-coil region spans residues 659-679 (EADEEELARRREARKQEQANN). Residue Ser-688 is modified to Phosphoserine. The stretch at 725 to 756 (VKLEEERRHRQKLEKDKRRKKRKEKEKKGKRR) forms a coiled coil. Positions 726-740 (KLEEERRHRQKLEKD) are enriched in basic and acidic residues. Positions 741–758 (KRRKKRKEKEKKGKRRHS) are enriched in basic residues. A phosphoserine mark is found at Ser-758 and Ser-759. Thr-762 is subject to Phosphothreonine. Ser-764, Ala-785, Ser-788, Lys-828, and Ser-829 each carry phosphoserine. Over residues 777–794 (VTEEMPENALPSDEDDKD) the composition is skewed to acidic residues. Basic and acidic residues predominate over residues 795-839 (PNDPYRALDIDLDKPLADSEKLPIQKHRNTETSKSPEKDVPMVEK). Basic residues-rich tracts occupy residues 840-853 (KSKK…KHKE) and 863-879 (EKEK…KHRK). The stretch at 845-869 (KKKEKKHKEKERDKEKKKEKEKKKS) forms a coiled coil. Val-931 carries the post-translational modification Phosphoserine.

This sequence belongs to the adaptor complexes large subunit family. In terms of assembly, AP-3 associates with the BLOC-1 complex. Adaptor protein complex 3 (AP-3) is a heterotetramer composed of two large adaptins (delta-type subunit AP3D1 and beta-type subunit AP3B1 or AP3B2), a medium adaptin (mu-type subunit AP3M1 or AP3M2) and a small adaptin (sigma-type subunit APS1 or AP3S2). Interacts with SLC30A2. Interacts with CLN3 (via dileucine motif); this interaction facilitates lysosomal targeting. In terms of tissue distribution, present in all adult tissues examined with the highest levels in skeletal muscle, heart, pancreas and testis.

The protein localises to the cytoplasm. It is found in the golgi apparatus membrane. In terms of biological role, part of the AP-3 complex, an adaptor-related complex which is not clathrin-associated. The complex is associated with the Golgi region as well as more peripheral structures. It facilitates the budding of vesicles from the Golgi membrane and may be directly involved in trafficking to lysosomes. Involved in process of CD8+ T-cell and NK cell degranulation. In concert with the BLOC-1 complex, AP-3 is required to target cargos into vesicles assembled at cell bodies for delivery into neurites and nerve terminals. The chain is AP-3 complex subunit delta-1 (AP3D1) from Homo sapiens (Human).